Here is a 185-residue protein sequence, read N- to C-terminus: Elongation factor P (185 aa).

Belongs to the elongation factor P family.

It is found in the cytoplasm. It participates in protein biosynthesis; polypeptide chain elongation. Its function is as follows. Involved in peptide bond synthesis. Stimulates efficient translation and peptide-bond synthesis on native or reconstituted 70S ribosomes in vitro. Probably functions indirectly by altering the affinity of the ribosome for aminoacyl-tRNA, thus increasing their reactivity as acceptors for peptidyl transferase. This Thermotoga petrophila (strain ATCC BAA-488 / DSM 13995 / JCM 10881 / RKU-1) protein is Elongation factor P.